The primary structure comprises 70 residues: U2-agatoxin-Ao1b (70 aa).

The signal sequence occupies residues 1–20 (MRAIISLILISAMVFSMIAA). Positions 21–34 (VPEEEGLQLSEDER) are excised as a propeptide. 3 disulfides stabilise this stretch: C37–C53, C44–C58, and C52–C68. At L69 the chain carries Leucine amide.

This sequence belongs to the neurotoxin 01 (U2-agtx) family. In terms of tissue distribution, expressed by the venom gland.

It is found in the secreted. Insect active toxin causing rapid but reversible paralysis in crickets. No activity shown in mammals. Does not show effect on mammalian voltage-gated calcium channels. This Agelena orientalis (Funnel-web spider) protein is U2-agatoxin-Ao1b.